The sequence spans 398 residues: MNIHEYQGKEILASYGVRIQRGIVANNPVEAVAAAKQLTTETGTSWYVVKAQVHAGGRGKGGGVKLAKNLQQVEEISEQIIGMQLITPQTSAEGKKVHKVLIAEDVYYPGESETSEFYISVLLNRSTGRNMIVYSTEGGMDIEEVAAHTPHLIHNEEIDPSVGLQAFQARRIAFNLGLSGNAFKEMVKFIDSLYNAYIGSDASMFEINPVLKTSDDKIMAVDAKVNIDDNALYRQPKYADMRDIREENPIEVEAKEVGLNYVDLDGTVGCMVNGAGLAMATMDLIKYAGFEPANFLDVGGTADAKRVETAFRIILKDENVKAILINIFGGIVRCDRVAQGVVDAYKNMGDAIKVPIIVRLQGTNAEIAKELIDNSGMPILSAVQFQEAADQVKAALSK.

Positions 9–253 constitute an ATP-grasp domain; it reads KEILASYGVR…IREENPIEVE (245 aa). ATP is bound by residues lysine 50, 57–59, valine 106, and glutamate 116; that span reads GRG. Residues asparagine 208 and aspartate 222 each coordinate Mg(2+). Residues asparagine 273 and 330–332 contribute to the substrate site; that span reads GIV.

It belongs to the succinate/malate CoA ligase beta subunit family. In terms of assembly, heterotetramer of two alpha and two beta subunits. Mg(2+) is required as a cofactor.

The catalysed reaction is succinate + ATP + CoA = succinyl-CoA + ADP + phosphate. It carries out the reaction GTP + succinate + CoA = succinyl-CoA + GDP + phosphate. It participates in carbohydrate metabolism; tricarboxylic acid cycle; succinate from succinyl-CoA (ligase route): step 1/1. In terms of biological role, succinyl-CoA synthetase functions in the citric acid cycle (TCA), coupling the hydrolysis of succinyl-CoA to the synthesis of either ATP or GTP and thus represents the only step of substrate-level phosphorylation in the TCA. The beta subunit provides nucleotide specificity of the enzyme and binds the substrate succinate, while the binding sites for coenzyme A and phosphate are found in the alpha subunit. The polypeptide is Succinate--CoA ligase [ADP-forming] subunit beta (Flavobacterium psychrophilum (strain ATCC 49511 / DSM 21280 / CIP 103535 / JIP02/86)).